The following is a 139-amino-acid chain: Deoxyuridine 5'-triphosphate nucleotidohydrolase (139 aa).

Substrate contacts are provided by residues 58 to 60 (RSG), asparagine 71, 75 to 77 (LID), and methionine 85.

This sequence belongs to the dUTPase family. It depends on Mg(2+) as a cofactor.

The enzyme catalyses dUTP + H2O = dUMP + diphosphate + H(+). It participates in pyrimidine metabolism; dUMP biosynthesis; dUMP from dCTP (dUTP route): step 2/2. Functionally, this enzyme is involved in nucleotide metabolism: it produces dUMP, the immediate precursor of thymidine nucleotides and it decreases the intracellular concentration of dUTP so that uracil cannot be incorporated into DNA. This chain is Deoxyuridine 5'-triphosphate nucleotidohydrolase, found in Gamma-proteobacterium EBAC31A08.